We begin with the raw amino-acid sequence, 66 residues long: Small ribosomal subunit protein eS27 (66 aa).

Zn(2+)-binding residues include Cys-21, Cys-24, Cys-40, and Cys-43. The C4-type zinc finger occupies 21-43 (CPVCGNEQVIFSHATFPARCLVC).

The protein belongs to the eukaryotic ribosomal protein eS27 family. As to quaternary structure, part of the 30S ribosomal subunit. It depends on Zn(2+) as a cofactor.

This Hyperthermus butylicus (strain DSM 5456 / JCM 9403 / PLM1-5) protein is Small ribosomal subunit protein eS27.